Here is a 343-residue protein sequence, read N- to C-terminus: tRNA N6-adenosine threonylcarbamoyltransferase (343 aa).

His120 and His124 together coordinate Fe cation. Residues 142–146 (VVSGG), Asp175, Gly188, Asp192, and Asn281 each bind substrate. Asp310 lines the Fe cation pocket.

Belongs to the KAE1 / TsaD family. Fe(2+) serves as cofactor.

Its subcellular location is the cytoplasm. The enzyme catalyses L-threonylcarbamoyladenylate + adenosine(37) in tRNA = N(6)-L-threonylcarbamoyladenosine(37) in tRNA + AMP + H(+). Its function is as follows. Required for the formation of a threonylcarbamoyl group on adenosine at position 37 (t(6)A37) in tRNAs that read codons beginning with adenine. Is involved in the transfer of the threonylcarbamoyl moiety of threonylcarbamoyl-AMP (TC-AMP) to the N6 group of A37, together with TsaE and TsaB. TsaD likely plays a direct catalytic role in this reaction. The chain is tRNA N6-adenosine threonylcarbamoyltransferase from Bacillus cereus (strain ATCC 14579 / DSM 31 / CCUG 7414 / JCM 2152 / NBRC 15305 / NCIMB 9373 / NCTC 2599 / NRRL B-3711).